The following is a 412-amino-acid chain: MLIPFLFKLTLPLASGIALSSCGTLPEADLGTAAGNQTSSEPTNSVEIVQANQPEIKAVPVIDGLEHPWGMAWLPNGDILITERPGRLRIVRDGVLDPEAIAGVVAVSTVSAQQLFASQQGGLLDIALHPRFAENRFVYFTYSHGTQQANRTRVARAVFDGEKLTDWQVIFEVGQTKPGGQHFGSRLTWLPDETLLVSIGDGGNPPVELEGDFIRQQAQNRASHLGKIIRINDDGTVPADNPFRNDPKAAPEVWSYGHRNIQGLAYDPVTQKVWATEHGSRGGDELNLIQKGKNYGWPVVSFSKEYSTDQPVAPATSRPDMVDPLQIWTPAIAPSGLTIYNGDRHPEWQGTIFAGGLVDRGIRHLRLDENNQIIDETTISIGQRVRDVRQGPDGHVYVLTDQNNGQLLRLES.

It belongs to the PQQ oxidoreductase GdhB family. Pyrroloquinoline quinone serves as cofactor.

This is an uncharacterized protein from Synechocystis sp. (strain ATCC 27184 / PCC 6803 / Kazusa).